The sequence spans 457 residues: Putative transposase y4bF (457 aa).

One can recognise an Integrase catalytic domain in the interval 128–313; it reads TFHQPRLRRE…RPLNLAPDRL (186 aa). Positions 406-440 are disordered; that stretch reads QDERPAPKVRTNSEKNGYTPRGRKPGKRTDFMNDP.

The chain is Putative transposase y4bF from Sinorhizobium fredii (strain NBRC 101917 / NGR234).